Here is a 172-residue protein sequence, read N- to C-terminus: Myosin regulatory light polypeptide 9 (172 aa).

Positions 1–16 (MSSKRAKTKTTKKRPQ) are enriched in basic residues. The interval 1 to 20 (MSSKRAKTKTTKKRPQRATS) is disordered. Residue Ser2 is modified to N-acetylserine. Thr19 is modified (phosphothreonine; by MLCK, CIT and ROCK2). Ser20 is modified (phosphoserine; by CDC42BP, CIT, MLCK, PAK1, ROCK1, ROCK2, DAPK1, DAPK2 and ZIPK/DAPK3). 3 EF-hand domains span residues 29 to 64 (SQIQ…LGKN), 98 to 133 (DPED…MGDR), and 134 to 169 (FTDE…GAKD). Asp42, Asn44, Asp46, and Asp53 together coordinate Ca(2+).

Myosin is a hexamer of 2 heavy chains and 4 light chains: interacts with myosin heavy chain MYO19. Interacts with LUZP1; the interaction results in inhibition of phosphorylation of MYL9 by DAPK3. In terms of processing, phosphorylation increases the actin-activated myosin ATPase activity and thereby regulates the contractile activity. It is required to generate the driving force in the migration of the cells but not necessary for localization of myosin-2 at the leading edge. Phosphorylation is required for myotube formation. Phosphorylated by DAPK3; DAPK3-mediated phosphorylation is inhibited by LUZP1.

It localises to the cytoplasm. The protein localises to the cytoskeleton. It is found in the cell cortex. Its function is as follows. Myosin regulatory subunit that plays an important role in regulation of both smooth muscle and nonmuscle cell contractile activity via its phosphorylation. Implicated in cytokinesis, receptor capping, and cell locomotion. In myoblasts, may regulate PIEZO1-dependent cortical actomyosin assembly involved in myotube formation. The sequence is that of Myosin regulatory light polypeptide 9 (MYL9) from Bos taurus (Bovine).